Here is a 213-residue protein sequence, read N- to C-terminus: Adenylate kinase (213 aa).

10–15 (GAGKGT) is a binding site for ATP. The tract at residues 30–59 (AVGDIFRTIIKTSTSEAELINNYVKQGALI) is NMP. AMP contacts are provided by residues Arg36, 57 to 59 (ALI), 85 to 88 (GYPR), and Gln92. Positions 123–161 (GRYSCKNCGKIYNVHFLQPKTDYVCDVCSSNVFDYRRDD) are LID. Arg124 contributes to the ATP binding site. Residues Cys127 and Cys130 each coordinate Zn(2+). 133–134 (IY) contacts ATP. Residues Cys147 and Cys150 each contribute to the Zn(2+) site. 2 residues coordinate AMP: Arg158 and Arg169. Lys197 contacts ATP.

This sequence belongs to the adenylate kinase family. In terms of assembly, monomer.

The protein localises to the cytoplasm. It carries out the reaction AMP + ATP = 2 ADP. It functions in the pathway purine metabolism; AMP biosynthesis via salvage pathway; AMP from ADP: step 1/1. Functionally, catalyzes the reversible transfer of the terminal phosphate group between ATP and AMP. Plays an important role in cellular energy homeostasis and in adenine nucleotide metabolism. The polypeptide is Adenylate kinase (Rickettsia typhi (strain ATCC VR-144 / Wilmington)).